Consider the following 240-residue polypeptide: MTLSFKPEDKLILALDGMSGAEVFMLIEKLPNLIWVKVGLELFTLLGPQIINQLRDRGKKVFLDLKFHDIPTTMGRACYQAAKTGAELITVHACAGKKGIEEANKSAVKGAKEVGLPPPSLLAVTVLTSWGSKDFVQELGIQQSLDQRVSLLANLASSAGIQGCICSPLEVMKLRKDFPEPFQLITPGIRSCGENINDQNRIMTPLEAIDAGSSKLVIGREVTSSENPSDAFNRICSQLI.

Substrate contacts are provided by residues Asp-16, Lys-37, 64–73 (DLKFHDIPTT), Thr-128, Arg-190, Gln-199, Gly-219, and Arg-220. Lys-66 (proton donor) is an active-site residue.

This sequence belongs to the OMP decarboxylase family. Type 1 subfamily. As to quaternary structure, homodimer.

It carries out the reaction orotidine 5'-phosphate + H(+) = UMP + CO2. The protein operates within pyrimidine metabolism; UMP biosynthesis via de novo pathway; UMP from orotate: step 2/2. Functionally, catalyzes the decarboxylation of orotidine 5'-monophosphate (OMP) to uridine 5'-monophosphate (UMP). This Prochlorococcus marinus (strain SARG / CCMP1375 / SS120) protein is Orotidine 5'-phosphate decarboxylase.